The chain runs to 474 residues: Proline--tRNA ligase (474 aa).

Belongs to the class-II aminoacyl-tRNA synthetase family. ProS type 3 subfamily. In terms of assembly, homodimer.

The protein resides in the cytoplasm. The catalysed reaction is tRNA(Pro) + L-proline + ATP = L-prolyl-tRNA(Pro) + AMP + diphosphate. Functionally, catalyzes the attachment of proline to tRNA(Pro) in a two-step reaction: proline is first activated by ATP to form Pro-AMP and then transferred to the acceptor end of tRNA(Pro). This chain is Proline--tRNA ligase, found in Onion yellows phytoplasma (strain OY-M).